The following is a 157-amino-acid chain: Protein Smg (157 aa).

It belongs to the Smg family.

This chain is Protein Smg, found in Buchnera aphidicola subsp. Acyrthosiphon pisum (strain Tuc7).